A 519-amino-acid polypeptide reads, in one-letter code: Circadian clock oscillator protein KaiC 1 (519 aa).

KaiC domains follow at residues 1-248 and 262-519; these read MNLP…INIF and ARIS…KTAE. ATP contacts are provided by glycine 50, threonine 51, glycine 52, lysine 53, threonine 54, leucine 55, serine 90, lysine 225, leucine 226, arginine 227, threonine 229, histidine 231, threonine 241, threonine 291, glycine 292, threonine 293, glycine 294, lysine 295, threonine 296, and leucine 297. Threonine 54 lines the Mg(2+) pocket. Mg(2+) is bound at residue threonine 296. Glutamate 319 serves as a coordination point for Mg(2+). Tryptophan 332 is a binding site for ATP. Serine 432 is modified (phosphoserine; by autocatalysis). Position 433 is a phosphothreonine; by autocatalysis (threonine 433). The ATP site is built by arginine 452, lysine 458, methionine 459, arginine 460, serine 462, histidine 464, and lysine 466.

This sequence belongs to the KaiC family. In terms of assembly, homohexamer; hexamerization is dependent on ATP-binding. Core component of the KaiABC complex, at least composed of a KaiC homohexamer, a KaiB dimer and two KaiA dimers. Interacts directly with SasA. Multimerizes, probably forming homohexamers, no interaction with KaiC2 or KaiC3 is seen. Interacts with KaiA. In another study interacts with itself, KaiB1, KaiB3 and KaiC3. Interacts with SasA (hik8). The cofactor is Mg(2+). Post-translationally, phosphorylated on serine and threonine residues by autocatalysis. Has a 4 step phosphorylation cycle; the autokinase acts first on Thr-433, then Ser-432. When Ser-432 is modified KaiC switches to an autophosphatase mode, acting first on phospho-Thr-433 then phospho-Ser-432.

It carries out the reaction L-seryl-[protein] + ATP = O-phospho-L-seryl-[protein] + ADP + H(+). The enzyme catalyses L-threonyl-[protein] + ATP = O-phospho-L-threonyl-[protein] + ADP + H(+). The catalysed reaction is ATP + H2O = ADP + phosphate + H(+). The interaction with KaiA enhances its phosphorylation status, while the interaction with KaiB decreases it. Functionally, component of the oscillator and circadian clock in this organism, enhances fitness in a rhythmic environment. Autophosphorylates in the presence of KaiA, no activity is seen in its absence. Central component of the KaiABC oscillator complex, which constitutes the main circadian regulator in cyanobacteria. Complex composition changes during the circadian cycle to control KaiC phosphorylation. KaiA stimulates KaiC autophosphorylation, while KaiB sequesters KaiA, leading to KaiC autodephosphorylation. Clock output pathways impact the RpaA transcriptional regulator. KaiC enhances the autophosphorylation activity of SasA, which then transfers its phosphate group to RpaA to activate it. KaiB and KaiC together enhance the phospho-RpaA dephosphatase activity of CikA. In terms of biological role, has a weak, temperature-independent ATPase activity; ATPase activity defines the circadian period. The phosphorylation state of KaiC modulates its ATPase activity and effects KaiB binding. This Synechocystis sp. (strain ATCC 27184 / PCC 6803 / Kazusa) protein is Circadian clock oscillator protein KaiC 1.